We begin with the raw amino-acid sequence, 410 residues long: PHAF1 protein At3g51130 (410 aa).

The protein belongs to the PHAF1 family.

The sequence is that of PHAF1 protein At3g51130 from Arabidopsis thaliana (Mouse-ear cress).